The following is a 564-amino-acid chain: NADPH oxidase 1 (564 aa).

Topologically, residues 1–9 are cytoplasmic; that stretch reads MGNWVVNHW. The helical transmembrane segment at 10-30 threads the bilayer; sequence FSVLFLVVWLGLNVFLFVDAF. The Extracellular segment spans residues 31–44; that stretch reads LKYEKADKYYYTRK. Residues 45-72 form a helical membrane-spanning segment; sequence ILGSTLACARASALCLNFNSTLILLPVC. The region spanning 54–283 is the Ferric oxidoreductase domain; that stretch reads RASALCLNFN…LAPVILYICE (230 aa). Residues 73–102 lie on the Cytoplasmic side of the membrane; that stretch reads RNLLSFLRGTCSFCSRTLRKQLDHNLTFHK. Residues His101 and His115 each coordinate heme. Residues 103 to 123 traverse the membrane as a helical segment; it reads LVAYMICLHTAIHIIAHLFNF. Topologically, residues 124 to 168 are extracellular; sequence DCYSRSRQATDGSLASILSSLSHDEKKGGSWLNPIQSRNTTVEYV. An N-linked (GlcNAc...) asparagine glycan is attached at Asn162. The helical transmembrane segment at 169 to 189 threads the bilayer; the sequence is TFTSIAGLTGVIMTIALILMV. Residues 190-206 are Cytoplasmic-facing; sequence TSATEFIRRSYFEVFWY. Residues 207–227 traverse the membrane as a helical segment; that stretch reads THHLFIFYILGLGIHGIGGIV. Heme is bound by residues His209 and His221. Residues 228-396 are Extracellular-facing; sequence RGQTEESMNE…TASEDVFQYE (169 aa). N-linked (GlcNAc...) asparagine glycosylation is present at Asn236. One can recognise an FAD-binding FR-type domain in the interval 284 to 391; that stretch reads RILRFYRSQQ…DGPFGTASED (108 aa). 338-344 lines the FAD pocket; sequence HPFTLTS. Residues 397-417 traverse the membrane as a helical segment; sequence VAVLVGAGIGVTPFASILKSI. Residues 397-536 form an interaction with NOXO1 region; sequence VAVLVGAGIG…GVFLCGPRTL (140 aa). The Cytoplasmic portion of the chain corresponds to 418–564; sequence WYKFQCADHN…VQFYFNKENF (147 aa). Position 430 is a phosphothreonine (Thr430).

In terms of assembly, NOX1, NOXA1, NOXO1, RAC1 and CYBA forms a functional multimeric complex supporting reactive oxygen species (ROS) production. Interacts with NOXO1. Interacts (via FAD-binding FR-type domain) with ARHGEF7 (via PH domain). The phosphorylated form at Thr-430 interacts with NOXA1 with greater affinity. FAD serves as cofactor. In terms of processing, phosphorylation at Thr-430 mediated by PKC/PRKBC positively regulates its interaction with NOXA1 and enzyme activity. As to expression, detected in colon, uterus, prostate, and colon carcinoma, but not in peripheral blood leukocytes.

The protein resides in the cell projection. Its subcellular location is the invadopodium membrane. It is found in the cell membrane. The enzyme catalyses NADPH + 2 O2 = 2 superoxide + NADP(+) + H(+). Its activity is regulated as follows. The oxidase activity is potentiated by NOXA1, NOXO1 and RAC1. NADPH oxidase that catalyzes the generation of superoxide from molecular oxygen utilizing NADPH as an electron donor. The polypeptide is NADPH oxidase 1 (Homo sapiens (Human)).